The chain runs to 324 residues: Phthalate 4,5-dioxygenase oxygenase reductase subunit (324 aa).

One can recognise an FAD-binding FR-type domain in the interval 9 to 111; the sequence is DGFTGLKVIA…ATPQNEFELI (103 aa). 115-229 provides a ligand contact to NAD(+); sequence RQFIFVAGGI…PGSIHFESFG (115 aa). Residues 241 to 324 form the 2Fe-2S ferredoxin-type domain; that stretch reads FSVTLGRSGI…ARNDVLVLDL (84 aa). Positions 275, 280, 283, and 311 each coordinate [2Fe-2S] cluster.

The protein belongs to the PDR/VanB family. This dioxygenase system consists of two proteins: phthalate oxygenase and phthalate oxygenase reductase. The cofactor is FMN.

It catalyses the reaction phthalate + NADH + O2 + H(+) = cis-4,5-dihydroxycyclohexa-2,6-diene-1,2-dicarboxylate + NAD(+). It participates in xenobiotic degradation; phthalate degradation; 3,4-dihydroxybenzoate from phthalate: step 1/3. This Pseudomonas putida (Arthrobacter siderocapsulatus) protein is Phthalate 4,5-dioxygenase oxygenase reductase subunit (pht2).